The following is a 100-amino-acid chain: RxLR effector protein SFI8 (100 aa).

A signal peptide spans 1–22; sequence MRSILYAVLAFAVLARSSAVAA. The RxLR-dEER motif lies at 43–57; it reads RSLRVEAQEVIQSGR. The Calmodulin-binding motif signature appears at 78–82; that stretch reads KPDIK.

The protein belongs to the RxLR effector family. In terms of assembly, interacts with the host calmodulin.

It is found in the secreted. It localises to the host nucleus. The protein resides in the host cytoplasm. Effector that suppresses flg22-induced post-translational MAP kinase activation both tomato and Arabidopsis. The perception of highly conserved pathogen- or microbe-associated molecular patterns (PAMPs/MAMPs), such as flg22, triggers converging signaling pathways recruiting MAP kinase cascades and inducing transcriptional re-programming, yielding a generic antimicrobial response. Associates with calmodulin to interfere with plant defense-associated calcium signaling in hosts. This Phytophthora infestans (strain T30-4) (Potato late blight agent) protein is RxLR effector protein SFI8.